A 449-amino-acid polypeptide reads, in one-letter code: Dynein axonemal assembly factor 3 (449 aa).

The protein belongs to the DNAAF3 family.

It localises to the cytoplasm. The protein resides in the dynein axonemal particle. Its function is as follows. Required for the assembly of axonemal inner and outer dynein arms. Involved in preassembly of dyneins into complexes before their transport into cilia. The sequence is that of Dynein axonemal assembly factor 3 (dnaaf3) from Xenopus tropicalis (Western clawed frog).